Reading from the N-terminus, the 515-residue chain is MNFQSNISAFLEDSLSHHTIPIVETFTVDTLTPIQMIEKLDREITYLLESKDDTSTWSRYSFIGLNPFLTIKEEQGRFSAADQDSKSLYTGNELKEVLNWMNTTYKIKTPELGIPFVGGAVGYLSYDMIPLIEPSVPSHTKETDMEKCMLFVCRTLIAYDHETKNVHFIQYARLTGEETKNEKMDVFHQNHLELQNLIEKMMDQKNIKELFLSADSYKTPSFETVSSNYEKSAFMADVEKIKSYIKAGDIFQGVLSQKFEVPIKADAFELYRVLRIVNPSPYMYYMKLLDREIVGSSPERLIHVQDGHLEIHPIAGTRKRGADKAEDERLKVELMKDEKEKAEHYMLVDLARNDIGRVAEYGSVSVPEFTKIVSFSHVMHIISVVTGRLKKGVHPVDALMSAFPAGTLTGAPKIRAMQLLQELEPTPRETYGGCIAYIGFDGNIDSCITIRTMSVKNGVASIQAGAGIVADSVPEAEYEESCNKAGALLKTIHIAEDMFHSKEDKADEQISTIVR.

Residues serine 50 and 281-283 (PYM) contribute to the L-tryptophan site. Residue 316–317 (GT) coordinates chorismate. Glutamate 343 contacts Mg(2+). Residues tyrosine 431, arginine 451, 465–467 (GAG), and glycine 467 contribute to the chorismate site. Residue glutamate 480 coordinates Mg(2+).

Belongs to the anthranilate synthase component I family. As to quaternary structure, heterotetramer consisting of two non-identical subunits: a beta subunit (TrpG) and a large alpha subunit (TrpE). Mg(2+) is required as a cofactor.

The enzyme catalyses chorismate + L-glutamine = anthranilate + pyruvate + L-glutamate + H(+). Its pathway is amino-acid biosynthesis; L-tryptophan biosynthesis; L-tryptophan from chorismate: step 1/5. With respect to regulation, feedback inhibited by tryptophan. In terms of biological role, part of a heterotetrameric complex that catalyzes the two-step biosynthesis of anthranilate, an intermediate in the biosynthesis of L-tryptophan. In the first step, the glutamine-binding beta subunit (TrpG) of anthranilate synthase (AS) provides the glutamine amidotransferase activity which generates ammonia as a substrate that, along with chorismate, is used in the second step, catalyzed by the large alpha subunit of AS (TrpE) to produce anthranilate. In the absence of TrpG, TrpE can synthesize anthranilate directly from chorismate and high concentrations of ammonia. In Bacillus subtilis (strain 168), this protein is Anthranilate synthase component 1 (trpE).